The following is a 180-amino-acid chain: Large ribosomal subunit protein mL41 (180 aa).

The transit peptide at 1 to 21 (MKLVLVSTRGVRSLNSTNFPA) directs the protein to the mitochondrion.

Belongs to the mitochondrion-specific ribosomal protein mL41 family. Component of the mitochondrial ribosome large subunit (39S) which comprises a 16S rRNA and about 50 distinct proteins.

The protein resides in the mitochondrion. This is Large ribosomal subunit protein mL41 (mrpl-41) from Caenorhabditis elegans.